The following is a 371-amino-acid chain: Cytochrome b (371 aa).

The next 4 membrane-spanning stretches (helical) occupy residues 25 to 45 (FGSM…FLAI), 69 to 90 (WTMQ…YTHI), 105 to 125 (WLSG…GYVL), and 170 to 190 (FFAL…VHII). 2 residues coordinate heme b: His75 and His89. Heme b-binding residues include His174 and His188. His193 contacts a ubiquinone. 4 consecutive transmembrane segments (helical) span residues 218–238 (YKDM…MSFS), 280–300 (LGGT…PFTH), 312–332 (FTQL…WTAT), and 339–358 (FILI…IINP).

The protein belongs to the cytochrome b family. The cytochrome bc1 complex contains 3 respiratory subunits (MT-CYB, CYC1 and UQCRFS1), 2 core proteins (UQCRC1 and UQCRC2) and probably 6 low-molecular weight proteins. Requires heme b as cofactor.

It localises to the mitochondrion inner membrane. In terms of biological role, component of the ubiquinol-cytochrome c reductase complex (complex III or cytochrome b-c1 complex) that is part of the mitochondrial respiratory chain. The b-c1 complex mediates electron transfer from ubiquinol to cytochrome c. Contributes to the generation of a proton gradient across the mitochondrial membrane that is then used for ATP synthesis. The chain is Cytochrome b (MT-CYB) from Elapognathus coronatus (Western crowned snake).